The sequence spans 338 residues: Anthranilate phosphoribosyltransferase (338 aa).

5-phospho-alpha-D-ribose 1-diphosphate contacts are provided by residues Gly-81, 84–85 (GD), Thr-89, 91–94 (NIST), 109–117 (KHGNRNLSS), and Ala-121. Residue Gly-81 participates in anthranilate binding. Ser-93 lines the Mg(2+) pocket. An anthranilate-binding site is contributed by Asn-112. Arg-167 contributes to the anthranilate binding site. Mg(2+) contacts are provided by Asp-226 and Glu-227.

The protein belongs to the anthranilate phosphoribosyltransferase family. As to quaternary structure, homodimer. It depends on Mg(2+) as a cofactor.

The enzyme catalyses N-(5-phospho-beta-D-ribosyl)anthranilate + diphosphate = 5-phospho-alpha-D-ribose 1-diphosphate + anthranilate. The protein operates within amino-acid biosynthesis; L-tryptophan biosynthesis; L-tryptophan from chorismate: step 2/5. In terms of biological role, catalyzes the transfer of the phosphoribosyl group of 5-phosphorylribose-1-pyrophosphate (PRPP) to anthranilate to yield N-(5'-phosphoribosyl)-anthranilate (PRA). This is Anthranilate phosphoribosyltransferase from Cereibacter sphaeroides (strain ATCC 17023 / DSM 158 / JCM 6121 / CCUG 31486 / LMG 2827 / NBRC 12203 / NCIMB 8253 / ATH 2.4.1.) (Rhodobacter sphaeroides).